The sequence spans 409 residues: N-acetylglucosamine-6-phosphate deacetylase (409 aa).

Glutamate 143 contributes to the a divalent metal cation binding site. 154-155 provides a ligand contact to substrate; the sequence is AH. A divalent metal cation is bound by residues histidine 211 and histidine 232. Substrate is bound by residues 235–236, arginine 243, and 269–272; these read NA and DGTH. Catalysis depends on aspartate 294, which acts as the Proton donor/acceptor. Residue 328 to 330 participates in substrate binding; it reads LSG.

This sequence belongs to the metallo-dependent hydrolases superfamily. NagA family. A divalent metal cation serves as cofactor.

It catalyses the reaction N-acetyl-D-glucosamine 6-phosphate + H2O = D-glucosamine 6-phosphate + acetate. Its pathway is amino-sugar metabolism; N-acetylneuraminate degradation. Functionally, hydrolyzes the N-glycolyl group from N-glycolylglucosamine 6-phosphate (GlcNGc-6-P) in the N-glycolylneuraminic acid (Neu5Gc) degradation pathway. Although human is not able to catalyze formation of Neu5Gc due to the inactive CMAHP enzyme, Neu5Gc is present in food and must be degraded. This is N-acetylglucosamine-6-phosphate deacetylase (AMDHD2) from Homo sapiens (Human).